We begin with the raw amino-acid sequence, 531 residues long: MSVTAESPSLRGGSILENKQELIDLKNIGEHARTVQPFKTSKHQPLIQGSVSKEAAIATHSALHFDLTPEKEKKIRDMYDRLDADNDGSIDIRDLTQALSLQAHIPASVAPKLLERMKSEHSDRVTYADFTNYVIAHEARLAEVFDKIDLNSDGEVDMAEIKSYCKEMGVNLDDQKAMSIVKKMDQSGSSSVNLNEFQDFMLLYPSTDMRDMVDFWRHNLIIDIGEDGQVPEDFTPQELLSGVWWRHLVAGGVAGAMSRTCTAPFDRIKVYLQVNSTKTNKLGVVSCVHLLHAEGGIKSFWRGNGINVIKIAPESAMKFMCYDQIKRWMQEYKGGAELSTIERLLAGSSAGAISQTAIYPMEVMKTRLALRRTGQLDKGMFHFAHKMYTKEGIKCFYKGYLPNLLGIIPYAGIDLTVYESLKSMYTKYYTEHTEPGVLALLACGTCSSTCGQLASYPLALVRTRLQARAISPKNSTQPDTMVGQFKHILQTEGFTGLYRGITPNFMKVIPAVSISYVVYEKVRKQLGATMT.

4 EF-hand domains span residues 70-105 (EKEK…QAHI), 106-135 (PASV…NYVI), 136-171 (AHEA…MGVN), and 172-207 (LDDQ…YPST). Residues Asp83, Asp85, Asp87, Ser89, and Asp94 each coordinate Ca(2+). Residues Asp149, Asn151, Asp153, Glu155, and Glu160 each coordinate Ca(2+). 3 Solcar repeats span residues 242–328 (GVWW…IKRW), 338–424 (LSTI…LKSM), and 435–525 (PGVL…VRKQ). The next 6 membrane-spanning stretches (helical) occupy residues 248 to 265 (LVAG…TAPF), 303 to 322 (GNGI…FMCY), 348 to 361 (SSAG…IYPM), 399 to 418 (GYLP…LTVY), 441 to 458 (LACG…SYPL), and 500 to 517 (GITP…ISYV).

The protein belongs to the mitochondrial carrier (TC 2.A.29) family.

It localises to the mitochondrion inner membrane. Functionally, calcium-dependent mitochondrial solute carrier. This Caenorhabditis elegans protein is Probable calcium-binding mitochondrial carrier F17E5.2.